The following is a 395-amino-acid chain: Elongation factor Tu (395 aa).

Residues 10–204 enclose the tr-type G domain; the sequence is KPHLNIGTIG…AVDTWIELPE (195 aa). Residues 19-26 form a G1 region; the sequence is GHVDHGKT. Residue 19-26 participates in GTP binding; it reads GHVDHGKT. Residue threonine 26 participates in Mg(2+) binding. The segment at 60–64 is G2; that stretch reads GITIN. The tract at residues 81–84 is G3; the sequence is DCPG. Residues 81-85 and 136-139 each bind GTP; these read DCPGH and NKVD. Residues 136-139 form a G4 region; the sequence is NKVD. The interval 174 to 176 is G5; the sequence is SAL.

This sequence belongs to the TRAFAC class translation factor GTPase superfamily. Classic translation factor GTPase family. EF-Tu/EF-1A subfamily. Monomer.

It localises to the cytoplasm. The enzyme catalyses GTP + H2O = GDP + phosphate + H(+). Its function is as follows. GTP hydrolase that promotes the GTP-dependent binding of aminoacyl-tRNA to the A-site of ribosomes during protein biosynthesis. The polypeptide is Elongation factor Tu (Christiangramia forsetii (strain DSM 17595 / CGMCC 1.15422 / KT0803) (Gramella forsetii)).